The chain runs to 73 residues: Protein SlyX homolog (73 aa).

A disordered region spans residues 54-73; that stretch reads LQQAESNAPAAPANERPPHY. Low complexity predominate over residues 57 to 67; that stretch reads AESNAPAAPAN.

It belongs to the SlyX family.

This Rhodopseudomonas palustris (strain BisA53) protein is Protein SlyX homolog.